A 562-amino-acid chain; its full sequence is Formate--tetrahydrofolate ligase (562 aa).

71 to 78 (TPAGEGKS) contacts ATP.

The protein belongs to the formate--tetrahydrofolate ligase family.

It catalyses the reaction (6S)-5,6,7,8-tetrahydrofolate + formate + ATP = (6R)-10-formyltetrahydrofolate + ADP + phosphate. It functions in the pathway one-carbon metabolism; tetrahydrofolate interconversion. In Bacillus anthracis (strain A0248), this protein is Formate--tetrahydrofolate ligase.